The following is a 399-amino-acid chain: S-adenosylmethionine synthase (399 aa).

His-15 serves as a coordination point for ATP. A Mg(2+)-binding site is contributed by Asp-17. Glu-43 lines the K(+) pocket. Glu-56 and Gln-99 together coordinate L-methionine. Positions 99-109 are flexible loop; sequence QSPDIAGGVDH. ATP is bound by residues 175–177, 242–243, Asp-251, 257–258, Ala-274, and Lys-278; these read DAK, RF, and RK. Position 251 (Asp-251) interacts with L-methionine. An L-methionine-binding site is contributed by Lys-282.

Belongs to the AdoMet synthase family. As to quaternary structure, homotetramer; dimer of dimers. The cofactor is Mg(2+). K(+) serves as cofactor.

It localises to the cytoplasm. It carries out the reaction L-methionine + ATP + H2O = S-adenosyl-L-methionine + phosphate + diphosphate. The protein operates within amino-acid biosynthesis; S-adenosyl-L-methionine biosynthesis; S-adenosyl-L-methionine from L-methionine: step 1/1. Functionally, catalyzes the formation of S-adenosylmethionine (AdoMet) from methionine and ATP. The overall synthetic reaction is composed of two sequential steps, AdoMet formation and the subsequent tripolyphosphate hydrolysis which occurs prior to release of AdoMet from the enzyme. The chain is S-adenosylmethionine synthase from Lactobacillus helveticus (strain DPC 4571).